Reading from the N-terminus, the 240-residue chain is Cysteine-rich venom protein (240 aa).

The signal sequence occupies residues 1–19; the sequence is MIAFIVLPILAAVLQQSSG. The region spanning 39 to 166 is the SCP domain; that stretch reads DLHNSLRRSV…EYSYFYVCQY (128 aa). 8 cysteine pairs are disulfide-bonded: Cys-75–Cys-153, Cys-92–Cys-167, Cys-148–Cys-164, Cys-186–Cys-193, Cys-189–Cys-198, Cys-202–Cys-235, Cys-211–Cys-229, and Cys-220–Cys-233. Residues 202–235 form the ShKT domain; the sequence is CRQENKFTNCDSLVRQSSCQDNYMKTNCPASCFC.

The protein belongs to the CRISP family. In terms of tissue distribution, expressed by the venom gland.

The protein resides in the secreted. In terms of biological role, blocks contraction of smooth muscle elicited by high potassium-induced depolarization, but does not block caffeine-stimulated contraction. May target voltage-gated calcium channels on smooth muscle. In Protobothrops jerdonii (Jerdon's pitviper), this protein is Cysteine-rich venom protein.